Reading from the N-terminus, the 252-residue chain is ATP-dependent L-serine kinase (252 aa).

Glu35 is a catalytic residue. O-phospho-L-serine is bound at residue Val73. Asp74 serves as a coordination point for Mg(2+). Positions 75, 76, 77, 107, 231, 233, and 235 each coordinate O-phospho-L-serine.

It belongs to the SerK family. Monomer. Requires Mg(2+) as cofactor.

It carries out the reaction L-serine + ATP = O-phospho-L-serine + ADP + H(+). In terms of biological role, free serine kinase that uses ATP to phosphorylate L-serine to yield O-phospho-L-serine and ADP. Can use ATP, UTP, CTP, GTP and the inorganic polyphosphates triphosphate and tetraphosphate as phosphate donors, with a preference for nucleoside 5'-triphosphates, but cannot use ADP. The catalytic efficiency is highest for ATP. Is specific for L-serine and cannot phosphorylate structurally similar compounds such as D-serine, L-threonine, L-homoserine, hydroxypyruvate, 3-hydroxypropionate and DL-glycerate. Likely contributes to serine metabolism, including cysteine biosynthesis. This is ATP-dependent L-serine kinase from Staphylothermus marinus (strain ATCC 43588 / DSM 3639 / JCM 9404 / F1).